We begin with the raw amino-acid sequence, 484 residues long: tRNA sulfurtransferase (484 aa).

Residues 63 to 167 (QAFGERLACI…GDKLYMVTKR (105 aa)) form the THUMP domain. ATP is bound by residues 185–186 (LI), lysine 267, glycine 289, and glutamine 298. A disulfide bond links cysteine 346 and cysteine 458. The Rhodanese domain occupies 406 to 484 (IDTNEVVIDI…GYHNVKVYRP (79 aa)). Cysteine 458 functions as the Cysteine persulfide intermediate in the catalytic mechanism.

This sequence belongs to the ThiI family.

It is found in the cytoplasm. The catalysed reaction is [ThiI sulfur-carrier protein]-S-sulfanyl-L-cysteine + a uridine in tRNA + 2 reduced [2Fe-2S]-[ferredoxin] + ATP + H(+) = [ThiI sulfur-carrier protein]-L-cysteine + a 4-thiouridine in tRNA + 2 oxidized [2Fe-2S]-[ferredoxin] + AMP + diphosphate. It catalyses the reaction [ThiS sulfur-carrier protein]-C-terminal Gly-Gly-AMP + S-sulfanyl-L-cysteinyl-[cysteine desulfurase] + AH2 = [ThiS sulfur-carrier protein]-C-terminal-Gly-aminoethanethioate + L-cysteinyl-[cysteine desulfurase] + A + AMP + 2 H(+). Its pathway is cofactor biosynthesis; thiamine diphosphate biosynthesis. Functionally, catalyzes the ATP-dependent transfer of a sulfur to tRNA to produce 4-thiouridine in position 8 of tRNAs, which functions as a near-UV photosensor. Also catalyzes the transfer of sulfur to the sulfur carrier protein ThiS, forming ThiS-thiocarboxylate. This is a step in the synthesis of thiazole, in the thiamine biosynthesis pathway. The sulfur is donated as persulfide by IscS. The polypeptide is tRNA sulfurtransferase (Shewanella sp. (strain ANA-3)).